Consider the following 896-residue polypeptide: Vacuolar zinc transporter TgZnT (896 aa).

The Cytoplasmic portion of the chain corresponds to Met-1–Lys-472. Residues Val-82–Val-91 are compositionally biased toward basic and acidic residues. Disordered regions lie at residues Val-82–Phe-104, Met-205–Ala-227, and Ser-255–Ser-329. Low complexity-rich tracts occupy residues Ser-210 to Pro-225 and Ser-255 to Ser-266. Basic and acidic residues predominate over residues Val-303–Asp-322. Residues Leu-473 to Leu-493 form a helical membrane-spanning segment. Residues Ala-494–Asp-502 lie on the Vacuolar side of the membrane. The chain crosses the membrane as a helical span at residues Ala-503 to Ser-523. Over Glu-524 to Glu-539 the chain is Cytoplasmic. A helical membrane pass occupies residues Ile-540–Ala-560. The Vacuolar portion of the chain corresponds to Ala-561–Gly-573. Residues Glu-574–Leu-594 form a helical membrane-spanning segment. Residues Lys-595–Tyr-737 lie on the Cytoplasmic side of the membrane. Residues Leu-621–Ser-707 form a disordered region. The span at Arg-656–Arg-680 shows a compositional bias: basic and acidic residues. A helical transmembrane segment spans residues Ile-738–Trp-758. Residues Trp-759–Asp-762 are Vacuolar-facing. The helical transmembrane segment at Trp-763 to Leu-783 threads the bilayer. Residues Ser-784–Arg-896 are Cytoplasmic-facing.

This sequence belongs to the cation diffusion facilitator (CDF) transporter (TC 2.A.4) family. SLC30A subfamily.

Its subcellular location is the vacuole membrane. The protein localises to the cytoplasmic vesicle membrane. Functionally, vacuolar zinc transporter that is probably involved in the transfer of zinc ions from the cytosol to the vacuole for intracellular storage. Plays an essential role in extracellular zinc tolerance. The sequence is that of Vacuolar zinc transporter TgZnT from Toxoplasma gondii (strain ATCC 50853 / GT1).